Reading from the N-terminus, the 640-residue chain is MQPRGERPAGRTQSPEHSSPGPGPEAPPPPQPPAPEAERARPRQARPAAPMEGAMQLLSREGHSVAHNSKRHYHDAFVAMSRMRQRGLLCDIVLHVAAKEIRAHKVVLASCSPYFHAMFTNEMSESRQTHVTLHDIDPQALDQLVQFAYTAEIVVGEGNVQTLLPAASLLQLNGVRDACCKFLLSQLDPSNCLGIRGFADTHSCSDLLKAAHRYVLQHFVDVAKTEEFMLLPLKQVLELVSSDSLNVPSEEDVYRAVLSWVKHDVDTRRQHVPRLMKCVRLPLLSRDFLLGHVDAESLVRHHPDCKDLLIEALKFHLLPEQRGVLGTSRTRPRRCEGAGPVLFAVGGGSLFAIHGDCEAYDTRTDRWHVVASMSTRRARVGVAAVGNRLYAVGGYDGTSDLATVESYDPVTNTWQPEVSMGTRRSCLGVAALHGLLYAAGGYDGASCLNSAERYDPLTGTWTSIAAMSTRRRYVRVATLDGNLYAVGGYDSSSHLATVEKYEPQVNSWTPVASMLSRRSSAGVAVLEGALYVAGGNDGTSCLNSVERYSTKAGAWESVAPMNIRRSTHDLVAMDGWLYAVGGNDGSSSLNSIEKYNPRTNKWVAASCMFTRRSSVGVAVLELLNFPPPSSPTLSVSSTSL.

A disordered region spans residues 1-50; the sequence is MQPRGERPAGRTQSPEHSSPGPGPEAPPPPQPPAPEAERARPRQARPAAP. Over residues 21 to 35 the composition is skewed to pro residues; sequence GPGPEAPPPPQPPAP. One can recognise a BTB domain in the interval 90–157; sequence CDIVLHVAAK…AYTAEIVVGE (68 aa). In terms of domain architecture, BACK spans 192-294; it reads CLGIRGFADT…SRDFLLGHVD (103 aa). Residues 287-639 form an interaction with F-actin region; that stretch reads DFLLGHVDAE…SPTLSVSSTS (353 aa). Kelch repeat units follow at residues 341–387, 388–434, 436–481, 482–528, 530–575, and 576–622; these read VLFA…AVGN, RLYA…ALHG, LYAA…TLDG, NLYA…VLEG, LYVA…AMDG, and WLYA…VLEL. Positions 638–640 are interaction with PDZK1; sequence TSL.

In terms of assembly, interacts with F-actin; the interaction disrupts the F-actin structures and leads to marked changes of neuronal morphology. Component of a complex, composed of PDZK1, SYNGAP1, KLHL17 and NMDA receptors. Interacts directly with PDZK1 (via PDZ1 domain); the interaction is important for integrity of actin cytoskeleton structures in neurons. Interacts with DLG4 and SYNGAP1. Interacts (via kelch repeats) with GRIK2 (via C-terminus); the interaction targets GRIK2 for degradation via ubiquitin-proteasome pathway. Interacts with GRIK1. Interacts with (via BTB domain) CUL3; the interaction regulates surface GRIK2 expression.

It is found in the postsynaptic density. Its subcellular location is the synapse. It functions in the pathway protein modification; protein ubiquitination. Substrate-recognition component of some cullin-RING-based BCR (BTB-CUL3-RBX1) E3 ubiquitin-protein ligase complexes. The BCR(KLHL17) complex mediates the ubiquitination and subsequent degradation of GLUR6. May play a role in the actin-based neuronal function. This chain is Kelch-like protein 17 (Klhl17), found in Mus musculus (Mouse).